Reading from the N-terminus, the 212-residue chain is NADH-quinone oxidoreductase subunit I (212 aa).

2 4Fe-4S ferredoxin-type domains span residues 76 to 105 and 115 to 144; these read RLLE…IITD and LNYS…HGDL. The [4Fe-4S] cluster site is built by cysteine 85, cysteine 88, cysteine 91, cysteine 95, cysteine 124, cysteine 127, cysteine 130, and cysteine 134.

Belongs to the complex I 23 kDa subunit family. In terms of assembly, NDH-1 is composed of 14 different subunits. Subunits NuoA, H, J, K, L, M, N constitute the membrane sector of the complex. [4Fe-4S] cluster is required as a cofactor.

The protein resides in the cell inner membrane. It carries out the reaction a quinone + NADH + 5 H(+)(in) = a quinol + NAD(+) + 4 H(+)(out). NDH-1 shuttles electrons from NADH, via FMN and iron-sulfur (Fe-S) centers, to quinones in the respiratory chain. The immediate electron acceptor for the enzyme in this species is believed to be ubiquinone. Couples the redox reaction to proton translocation (for every two electrons transferred, four hydrogen ions are translocated across the cytoplasmic membrane), and thus conserves the redox energy in a proton gradient. This chain is NADH-quinone oxidoreductase subunit I, found in Helicobacter hepaticus (strain ATCC 51449 / 3B1).